A 155-amino-acid polypeptide reads, in one-letter code: 3-hydroxyacyl-[acyl-carrier-protein] dehydratase FabZ (155 aa).

Residue H57 is part of the active site.

The protein belongs to the thioester dehydratase family. FabZ subfamily.

The protein resides in the cytoplasm. It catalyses the reaction a (3R)-hydroxyacyl-[ACP] = a (2E)-enoyl-[ACP] + H2O. Functionally, involved in unsaturated fatty acids biosynthesis. Catalyzes the dehydration of short chain beta-hydroxyacyl-ACPs and long chain saturated and unsaturated beta-hydroxyacyl-ACPs. The polypeptide is 3-hydroxyacyl-[acyl-carrier-protein] dehydratase FabZ (Sorangium cellulosum (strain So ce56) (Polyangium cellulosum (strain So ce56))).